Consider the following 93-residue polypeptide: Alpha-defensin 6/12 (93 aa).

Residues 1 to 19 (MKTLILLSALVLLAFQVQA) form the signal peptide. The propeptide occupies 20 to 60 (DPIQNTDEETKTEEQPGEEDQAVSVSFGDPEGTSLQEESLR). A disordered region spans residues 23–54 (QNTDEETKTEEQPGEEDQAVSVSFGDPEGTSL). Intrachain disulfides connect Cys64-Cys92, Cys66-Cys81, and Cys71-Cys91.

The protein belongs to the alpha-defensin family. As to expression, paneth cells of the small bowel.

Its subcellular location is the secreted. Functionally, has broad-spectrum antimicrobial properties. Has antibacterial activity against the Gram-positive bacterium L.monocytogenes EGD and the Gram-negative bacteria E.coli ML-35p and avirulent S.typhimurium 7953, but not against the mouse-virulent S.typhimurium 14028S. Probably contributes to the antimicrobial barrier function of the small bowel mucosa. The protein is Alpha-defensin 6/12 (Defa6) of Mus musculus (Mouse).